The sequence spans 21 residues: 40 kDa major outer membrane protein (21 aa).

In terms of assembly, disulfide bond interactions within and between MOMP molecules and other components form high molecular-weight oligomers.

Its subcellular location is the cell outer membrane. Functionally, structural rigidity of the outer membrane of elementary bodies and porin forming, permitting diffusion of solutes through the intracellular reticulate body membrane. This is 40 kDa major outer membrane protein from Actinobacillus pleuropneumoniae (Haemophilus pleuropneumoniae).